The primary structure comprises 395 residues: NADH-quinone oxidoreductase subunit D (395 aa).

Belongs to the complex I 49 kDa subunit family. As to quaternary structure, NDH-1 is composed of 14 different subunits. Subunits NuoB, C, D, E, F, and G constitute the peripheral sector of the complex.

The protein resides in the cell inner membrane. It carries out the reaction a quinone + NADH + 5 H(+)(in) = a quinol + NAD(+) + 4 H(+)(out). Functionally, NDH-1 shuttles electrons from NADH, via FMN and iron-sulfur (Fe-S) centers, to quinones in the respiratory chain. The immediate electron acceptor for the enzyme in this species is believed to be a menaquinone. Couples the redox reaction to proton translocation (for every two electrons transferred, four hydrogen ions are translocated across the cytoplasmic membrane), and thus conserves the redox energy in a proton gradient. In Chlorobium luteolum (strain DSM 273 / BCRC 81028 / 2530) (Pelodictyon luteolum), this protein is NADH-quinone oxidoreductase subunit D.